Here is a 633-residue protein sequence, read N- to C-terminus: CDK5 and ABL1 enzyme substrate 1 (633 aa).

Residues 1–29 (MAAAAAAATTAACSSGSAGTDAAGASGLQ) show a composition bias toward low complexity. The interval 1–99 (MAAAAAAATT…EGGAAKPGAG (99 aa)) is disordered. The interval 1 to 109 (MAAAAAAATT…GACGARTRFS (109 aa)) is interaction with TDRD7. Over residues 51–61 (PPRKPRMDPRR) the composition is skewed to basic and acidic residues. Phosphoserine is present on residues S168 and S287. The tract at residues 179–492 (QWQPPRPAPL…TTVIDYVKPS (314 aa)) is interaction with CDK3. S313 carries the post-translational modification Phosphoserine; by CDK2 and CDK3. Residue T415 is modified to Phosphothreonine.

The protein belongs to the cyclin family. As to quaternary structure, found in a complex with p53/TP53. Found in a number of complexes with CDK2, CDK3, CDK5, ABL1, TDRD7, CDK17, CCNA1, CCNE1 and TP73. Interacts with CDK2, CDK3, CDK5, ABL1 and TDRD7. In terms of processing, phosphorylated on Ser-313 by CCNE1/CDK3. Phosphorylated on serine/threonine residues by CDK5 and on tyrosine residues by ABL1. Also phosphorylated in vitro by CCNA1/CDK2, CCNE1/CDK2, CCNA1/CDK3 and CCNE1/CDK3. In terms of tissue distribution, expressed in breast, pancreas, colon, head and neck (at protein level). Strongly decreased in more than half of cases of atypical endometrial hyperplasia and in more than 90% of endometrial cancers.

Its subcellular location is the nucleus. It is found in the cytoplasm. In terms of biological role, cyclin-dependent kinase binding protein. Enhances cyclin-dependent kinase tyrosine phosphorylation by nonreceptor tyrosine kinases, such as that of CDK5 by activated ABL1, which leads to increased CDK5 activity and is critical for neuronal development, and that of CDK2 by WEE1, which leads to decreased CDK2 activity and growth inhibition. Positively affects neuronal outgrowth. Plays a role as a regulator for p53/p73-induced cell death. The sequence is that of CDK5 and ABL1 enzyme substrate 1 (CABLES1) from Homo sapiens (Human).